Consider the following 507-residue polypeptide: Probable DNA ligase (507 aa).

Residue Glu209 participates in ATP binding. The active-site N6-AMP-lysine intermediate is Lys211. Residues Arg216, Arg231, Glu260, Phe295, Arg366, and Lys372 each contribute to the ATP site.

The protein belongs to the ATP-dependent DNA ligase family. The cofactor is Mg(2+).

The catalysed reaction is ATP + (deoxyribonucleotide)n-3'-hydroxyl + 5'-phospho-(deoxyribonucleotide)m = (deoxyribonucleotide)n+m + AMP + diphosphate.. Its function is as follows. DNA ligase that seals nicks in double-stranded DNA during DNA replication, DNA recombination and DNA repair. The protein is Probable DNA ligase of Pseudarthrobacter chlorophenolicus (strain ATCC 700700 / DSM 12829 / CIP 107037 / JCM 12360 / KCTC 9906 / NCIMB 13794 / A6) (Arthrobacter chlorophenolicus).